A 669-amino-acid polypeptide reads, in one-letter code: MPTDNDPILVTCGLPYANGPAHIGHLRTYVPADIFVRALRRMGHDVLFICGSDAHGTPIVVNAESRGMSPRELVEFYHKHFEDVFRSINVRFDYFGCTDDPSNHHRTQEIVRALMERGHVYPKEIELAYCPRCERFLPDRYVEGICPYCGVPARGDECDQGCGRHLEPGEIKDAVCKVCGTRAEYRKQTHYFFRLSAFREFLLDYLQRLGGTASARNYALEWVRQELKDWCITRNMSWGVKFPGSEDLVVYVWVDAPIGYISFTEEWCKAHGVPWERYWRGKSRIIHFIGGDIVYHHCIFWPAMLEGAGYTLPSDVVASGMLKIDDKKFSKSRGYVVWVKDDYLDQGLEPDYLRYYLASYTSHTKEVNFSWKILQEKVNTELVGAFGNFLNRAVTFAVKNFDGKVPEGELDPEVMKRIEMSVGDVSSSLMEYEFKRASDAVLSLADYANTYFQSHEPWKLIRSDRRAAGSVLRNCLQMVKAMIILMEPFMPSRMAVAWKQLGMESLDDIQFRDAVQPIPEGHPLGTPKILFSRIEDSTVKRLEEIFRERVRRAEGAGEKVKEKPVIPFDQFKALDLRVGTVLEAERIKGSDKLLRLIVDIGEKRQIVAGIAKMYKPEELVGRQVVVVANLEPVKIFGVESRGMLLAADINGDAVLLKPDKEVPAGCGIR.

The 'HIGH' region signature appears at 15–25 (PYANGPAHIGH). 4 residues coordinate Zn(2+): C146, C149, C158, and C162. The short motif at 328-332 (KFSKS) is the 'KMSKS' region element. K331 lines the ATP pocket. One can recognise a tRNA-binding domain in the interval 570–669 (QFKALDLRVG…KEVPAGCGIR (100 aa)).

It belongs to the class-I aminoacyl-tRNA synthetase family. MetG type 1 subfamily. In terms of assembly, homodimer. It depends on Zn(2+) as a cofactor.

The protein localises to the cytoplasm. The catalysed reaction is tRNA(Met) + L-methionine + ATP = L-methionyl-tRNA(Met) + AMP + diphosphate. Is required not only for elongation of protein synthesis but also for the initiation of all mRNA translation through initiator tRNA(fMet) aminoacylation. The polypeptide is Methionine--tRNA ligase (Methanothrix thermoacetophila (strain DSM 6194 / JCM 14653 / NBRC 101360 / PT) (Methanosaeta thermophila)).